A 201-amino-acid polypeptide reads, in one-letter code: 3-isopropylmalate dehydratase small subunit (201 aa).

Belongs to the LeuD family. LeuD type 1 subfamily. As to quaternary structure, heterodimer of LeuC and LeuD.

The enzyme catalyses (2R,3S)-3-isopropylmalate = (2S)-2-isopropylmalate. The protein operates within amino-acid biosynthesis; L-leucine biosynthesis; L-leucine from 3-methyl-2-oxobutanoate: step 2/4. In terms of biological role, catalyzes the isomerization between 2-isopropylmalate and 3-isopropylmalate, via the formation of 2-isopropylmaleate. The polypeptide is 3-isopropylmalate dehydratase small subunit (Shewanella baltica (strain OS155 / ATCC BAA-1091)).